Consider the following 371-residue polypeptide: Anhydro-N-acetylmuramic acid kinase (371 aa).

An ATP-binding site is contributed by 9–16; that stretch reads GTSLDAVD.

The protein belongs to the anhydro-N-acetylmuramic acid kinase family.

It catalyses the reaction 1,6-anhydro-N-acetyl-beta-muramate + ATP + H2O = N-acetyl-D-muramate 6-phosphate + ADP + H(+). Its pathway is amino-sugar metabolism; 1,6-anhydro-N-acetylmuramate degradation. It participates in cell wall biogenesis; peptidoglycan recycling. In terms of biological role, catalyzes the specific phosphorylation of 1,6-anhydro-N-acetylmuramic acid (anhMurNAc) with the simultaneous cleavage of the 1,6-anhydro ring, generating MurNAc-6-P. Is required for the utilization of anhMurNAc either imported from the medium or derived from its own cell wall murein, and thus plays a role in cell wall recycling. In Caulobacter vibrioides (strain ATCC 19089 / CIP 103742 / CB 15) (Caulobacter crescentus), this protein is Anhydro-N-acetylmuramic acid kinase.